Here is a 320-residue protein sequence, read N- to C-terminus: tRNA uridine(34) hydroxylase (320 aa).

Residues 123 to 217 enclose the Rhodanese domain; sequence EDENTVILDA…YGKDPETKGQ (95 aa). C177 serves as the catalytic Cysteine persulfide intermediate.

Belongs to the TrhO family.

The enzyme catalyses uridine(34) in tRNA + AH2 + O2 = 5-hydroxyuridine(34) in tRNA + A + H2O. Its function is as follows. Catalyzes oxygen-dependent 5-hydroxyuridine (ho5U) modification at position 34 in tRNAs. In Staphylococcus epidermidis (strain ATCC 12228 / FDA PCI 1200), this protein is tRNA uridine(34) hydroxylase.